Here is a 516-residue protein sequence, read N- to C-terminus: Flagellar radial spoke protein 3 (516 aa).

Polar residues-rich tracts occupy residues 1–11 (MVQAKAQQQLY) and 62–74 (ATQT…SPAS). Disordered regions lie at residues 1 to 32 (MVQA…EDET), 60 to 90 (ADAT…TPEA), 388 to 412 (NAKW…AAEE), and 424 to 447 (AAAE…DGVE). Positions 391–412 (WEADKAEAAEKARAEAEAAAEE) are enriched in basic and acidic residues.

Belongs to the flagellar radial spoke RSP3 family. As to quaternary structure, interacts with FAP91. Protein 3 is one of the 5 radial spoke proteins that are phosphorylated. Post-translationally, protein 3a might only differ from protein 3 in being unphosphorylated.

Its subcellular location is the cytoplasm. It is found in the cytoskeleton. The protein localises to the flagellum axoneme. In terms of biological role, protein 3 may attach the radial spoke to the outer doublet microtubule or is required to form a stable spoke structure. Functionally, flagellar radial spokes contribute to the regulation of dynein arm activity and thus the pattern of flagellar bending. They consist of a thin stalk, which is attached to the a subfiber of the outer doublet microtubule, and a bulbous head, which is attached to the stalk and appears to interact with the projections from the central pair of microtubules. This chain is Flagellar radial spoke protein 3, found in Chlamydomonas reinhardtii (Chlamydomonas smithii).